The following is a 361-amino-acid chain: Palmitoyltransferase ZDHHC2 (361 aa).

The Cytoplasmic portion of the chain corresponds to 1 to 15; that stretch reads MAPSGSRSFDCWRVL. A helical transmembrane segment spans residues 16-36; that stretch reads YWIPVLFISLIVAWSYYAYVV. Residues 37–50 are Lumenal-facing; it reads QLCIETIENMGEKT. The chain crosses the membrane as a helical span at residues 51–71; that stretch reads VYLLIYHLLFLMFVWSYWQTI. The Cytoplasmic portion of the chain corresponds to 72–167; sequence YSKPMNPLKE…NNCVGFANYK (96 aa). The 51-residue stretch at 124 to 174 folds into the DHHC domain; that stretch reads RYCDRCLLLKPDRCHHCSACDMCILKMDHHCPWVNNCVGFANYKFFMLFLA. C154 (S-palmitoyl cysteine intermediate) is an active-site residue. The helical transmembrane segment at 168–188 threads the bilayer; sequence FFMLFLAYSLLYCLFVTATDM. Topologically, residues 189–207 are lumenal; that stretch reads QYFIQFWTNGLPDTQAKFH. The helical transmembrane segment at 208–228 threads the bilayer; that stretch reads IMFLFFAASTFSVSLAFLFAY. Topologically, residues 229–361 are cytoplasmic; the sequence is HCWLVCKNRS…NPALTIEKET (133 aa). Positions 296–361 are mediates localization to plasma membrane and recycling endosomes; the sequence is NPDPEQPSIP…NPALTIEKET (66 aa). Over residues 299–308 the composition is skewed to pro residues; the sequence is PEQPSIPPGR. Positions 299-361 are disordered; it reads PEQPSIPPGR…NPALTIEKET (63 aa). Residues 331–340 show a composition bias toward polar residues; it reads SRLLNNGQTD. A Non-canonical dileucine endocytic signal motif is present at residues 333-334; it reads LL. The short motif at 352–355 is the NPxY-like endocytic signal element; the sequence is NPAL.

This sequence belongs to the DHHC palmitoyltransferase family. Monomer. Homodimer. The monomeric form has a higher catalytic activity. In terms of processing, autopalmitoylated.

Its subcellular location is the endoplasmic reticulum membrane. The protein resides in the golgi apparatus membrane. It is found in the postsynaptic density. The protein localises to the postsynaptic recycling endosome membrane. It localises to the cell membrane. The catalysed reaction is L-cysteinyl-[protein] + hexadecanoyl-CoA = S-hexadecanoyl-L-cysteinyl-[protein] + CoA. The enzyme catalyses L-cysteinyl-[protein] + tetradecanoyl-CoA = S-tetradecanoyl-L-cysteinyl-[protein] + CoA. It catalyses the reaction L-cysteinyl-[protein] + octadecanoyl-CoA = S-octadecanoyl-L-cysteinyl-[protein] + CoA. Palmitoyltransferase that catalyzes the addition of palmitate onto various protein substrates and is involved in a variety of cellular processes. Has no stringent fatty acid selectivity and in addition to palmitate can also transfer onto target proteins myristate from tetradecanoyl-CoA and stearate from octadecanoyl-CoA. The protein is Palmitoyltransferase ZDHHC2 of Danio rerio (Zebrafish).